Here is a 258-residue protein sequence, read N- to C-terminus: Synapse differentiation-inducing gene protein 1 (258 aa).

At 1 to 181 (MDGIIEQKSM…NFLMMPPRDH (181 aa)) the chain is on the cytoplasmic side. S137 is subject to Phosphoserine. A helical transmembrane segment spans residues 182–202 (LGLSVFSMLCCFWPLGIAAFY). Residues 203–228 (LSHETNKAVAKGDLHQASTSSRRALF) lie on the Extracellular side of the membrane. The segment at residues 229–249 (LAVLSITIGTGVYVGVAVALI) is an intramembrane region (helical). Residues 250 to 258 (AYLSKNNHL) are Extracellular-facing.

Belongs to the CD225/Dispanin family. Homodimer. Interacts with GRIA1 and GRIA2.

The protein resides in the cell membrane. The protein localises to the early endosome membrane. It localises to the postsynaptic density membrane. Its subcellular location is the synapse. It is found in the cell projection. The protein resides in the dendrite. The protein localises to the dendritic spine. May regulate AMPA receptor content at nascent synapses, and have a role in postsynaptic development and maturation. The protein is Synapse differentiation-inducing gene protein 1 (SYNDIG1) of Homo sapiens (Human).